Here is a 95-residue protein sequence, read N- to C-terminus: Small ribosomal subunit protein bS6 (95 aa).

Belongs to the bacterial ribosomal protein bS6 family.

Binds together with bS18 to 16S ribosomal RNA. The protein is Small ribosomal subunit protein bS6 of Corynebacterium jeikeium (strain K411).